A 188-amino-acid chain; its full sequence is MNIQSDGIRIDLVTGSRRISNLGWASVLLLGTSGFLLTGLSSYLGKDLIPFLYPSEEHMKIAFAPQGLVMCFYGIAGLFLSTYLWCAILWNVGGGYNEFDRQEGTITIFRWGFPGQNRRIRIRCLIKDVKAVRIETQTGLLSRNDISILLRDKQRLVFNQLGDSLTLQEIEDKAVQLAQFLQVPLEGV.

Transmembrane regions (helical) follow at residues 22–42 (LGWASVLLLGTSGFLLTGLSS) and 68–88 (LVMCFYGIAGLFLSTYLWCAI).

It belongs to the Ycf4 family.

The protein resides in the plastid. It localises to the chloroplast thylakoid membrane. Seems to be required for the assembly of the photosystem I complex. This Zygnema circumcarinatum (Green alga) protein is Photosystem I assembly protein Ycf4.